The following is a 110-amino-acid chain: Insulin (110 aa).

The first 24 residues, 1-24 (MALWMRLLPLLALLALWGPDPVPA), serve as a signal peptide directing secretion. Intrachain disulfides connect C31/C96, C43/C109, and C95/C100. A propeptide spans 57-87 (EAEDPQVGQVELGGGPGAGSLQPLALEGSLQ) (c peptide).

This sequence belongs to the insulin family. In terms of assembly, heterodimer of a B chain and an A chain linked by two disulfide bonds.

The protein localises to the secreted. Its function is as follows. Insulin decreases blood glucose concentration. It increases cell permeability to monosaccharides, amino acids and fatty acids. It accelerates glycolysis, the pentose phosphate cycle, and glycogen synthesis in liver. The polypeptide is Insulin (INS) (Chlorocebus aethiops (Green monkey)).